Consider the following 462-residue polypeptide: Elongation factor 1-alpha 1 (462 aa).

Gly-2 carries the post-translational modification N,N,N-trimethylglycine. The region spanning 5–242 (KTHINIVVIG…DCILPPTRPT (238 aa)) is the tr-type G domain. A G1 region spans residues 14 to 21 (GHVDSGKS). 14 to 21 (GHVDSGKS) lines the GTP pocket. At Lys-36 the chain carries N6,N6,N6-trimethyllysine; alternate. At Lys-36 the chain carries N6,N6-dimethyllysine; alternate. The residue at position 36 (Lys-36) is an N6-methyllysine; alternate. Lys-55 is subject to N6,N6-dimethyllysine. The segment at 70-74 (GITID) is G2. Position 79 is an N6,N6,N6-trimethyllysine; by EEF1AKMT1 (Lys-79). Residues 91–94 (DAPG) form a G3 region. Position 153–156 (153–156 (NKMD)) interacts with GTP. The G4 stretch occupies residues 153-156 (NKMD). N6,N6,N6-trimethyllysine; alternate; by EEF1AKMT3 is present on Lys-165. Lys-165 is subject to N6,N6-dimethyllysine; alternate; by EEF1AKMT3. Lys-165 bears the N6-acetyllysine; alternate mark. N6-methyllysine; alternate; by EEF1AKMT3 is present on Lys-165. Residue Lys-172 is modified to N6-acetyllysine. 194–196 (SGW) serves as a coordination point for GTP. The tract at residues 194 to 196 (SGW) is G5. Lys-273 carries the N6-acetyllysine modification. Ser-300 carries the phosphoserine; by TGFBR1 modification. A 5-glutamyl glycerylphosphorylethanolamine modification is found at Glu-301. Lys-318 carries the post-translational modification N6,N6,N6-trimethyllysine; by EEF1AKMT2. Position 374 is a 5-glutamyl glycerylphosphorylethanolamine (Glu-374). Lys-385 is covalently cross-linked (Glycyl lysine isopeptide (Lys-Gly) (interchain with G-Cter in ubiquitin)). Lys-392 is modified (N6-acetyllysine; alternate). An N6-succinyllysine; alternate modification is found at Lys-392. Thr-432 bears the Phosphothreonine; by PASK mark. An N6-acetyllysine modification is found at Lys-439.

It belongs to the TRAFAC class translation factor GTPase superfamily. Classic translation factor GTPase family. EF-Tu/EF-1A subfamily. Found in a nuclear export complex with XPO5, EEF1A1, Ran and aminoacylated tRNA. Interacts with PARP1 and TXK. Interacts with KARS1. May interact with ERGIC2. Interacts with IFIT1 (via TPR repeats 4-7). Interacts with DLC1, facilitating distribution to the membrane periphery and ruffles upon growth factor stimulation. Interacts with ZPR1; the interaction occurs in a epidermal growth factor (EGF)-dependent manner. Interacts with PPP1R16B. Interacts with SPHK1 and SPHK2; both interactions increase SPHK1 and SPHK2 kinase activity. Interacts with guanyl-nucleotide exchange factor EEF1B2. Interacts (via middle-region) with HTATIP2 (via N-terminus); the interaction is direct and competes with EEF1A1 binding to guanyl-nucleotide exchange factor EEF1B2, thereby inhibiting GDP for GTP exchange and reactivation of EEF1A1. Interacts with tRNA. In terms of processing, ISGylated. Phosphorylated by TXK. Phosphorylation by PASK increases translation efficiency. Phosphorylated by ROCK2. Phosphorylation by TGFBR1 inhibits translation elongation. Post-translationally, trimethylated at Lys-79 by EEF1AKMT1. Methylated at Lys-165 by EEF1AKMT3, methylation by EEF1AKMT3 is dynamic as well as inducible by stress conditions, such as ER-stress, and plays a regulatory role on mRNA translation. Trimethylated at Lys-318 by EEF1AKMT2. Mono-, di-, and trimethylated at Lys-36 by EEF1AKMT4; trimethylated form is predominant. Methylation by EEF1AKMT4 contributes to the fine-tuning of translation rates for a subset of tRNAs. Trimethylated at Gly-2 by METTL13. Mono- and dimethylated at Lys-55 by METTL13; dimethylated form is predominant. In terms of processing, ubiquitinated at Lys-385 by RNF14 in response to ribosome collisions (ribosome stalling), leading to its degradation by the proteasome and rescue of stalled ribosomes.

It is found in the cytoplasm. Its subcellular location is the nucleus. The protein resides in the nucleolus. The protein localises to the cell membrane. The catalysed reaction is GTP + H2O = GDP + phosphate + H(+). In terms of biological role, translation elongation factor that catalyzes the GTP-dependent binding of aminoacyl-tRNA (aa-tRNA) to the A-site of ribosomes during the elongation phase of protein synthesis. Base pairing between the mRNA codon and the aa-tRNA anticodon promotes GTP hydrolysis, releasing the aa-tRNA from EEF1A1 and allowing its accommodation into the ribosome. The growing protein chain is subsequently transferred from the P-site peptidyl tRNA to the A-site aa-tRNA, extending it by one amino acid through ribosome-catalyzed peptide bond formation. Also plays a role in the positive regulation of IFNG transcription in T-helper 1 cells as part of an IFNG promoter-binding complex with TXK and PARP1. Also plays a role in cytoskeleton organization by promoting actin bundling. The chain is Elongation factor 1-alpha 1 (EEF1A1) from Bos taurus (Bovine).